Here is a 160-residue protein sequence, read N- to C-terminus: Small ribosomal subunit protein uS7A (160 aa).

It belongs to the universal ribosomal protein uS7 family. As to quaternary structure, part of the 30S ribosomal subunit. Contacts proteins S9 and S11.

Its function is as follows. One of the primary rRNA binding proteins, it binds directly to 16S rRNA where it nucleates assembly of the head domain of the 30S subunit. Is located at the subunit interface close to the decoding center, probably blocks exit of the E-site tRNA. In Aquifex aeolicus (strain VF5), this protein is Small ribosomal subunit protein uS7A.